A 59-amino-acid polypeptide reads, in one-letter code: U-myrmeciitoxin(01)-Mg5a (59 aa).

A signal peptide spans 1 to 21 (MRLSYLSLALAIIFVLTIMHA). Positions 22–38 (SNVEAKASADPEPDAVG) are excised as a propeptide.

As to expression, expressed by the venom gland.

The protein resides in the secreted. Its function is as follows. May have antimicrobial properties, like most ant linear peptides. This chain is U-myrmeciitoxin(01)-Mg5a, found in Myrmecia gulosa (Red bulldog ant).